A 238-amino-acid chain; its full sequence is MKVSLFVTCLVDMFQTNVGKATVELLERLGCEVDFPEGQICCGQPAYNSGYVHDAKKAMKRMIETFQDSEYVVSPSGSCTTMFREYPHLFQDDPKWADKAKKLADKTYELTDFIVNVLGVEDVGATLHTKATLHTSCHMTRLLGVRKEPMKLLSHVKGLQFTELPGKHNCCGFGGTFSVKMAQISEQMVDEKVECVEETGAEVLIGADCGCLMNIGGRLGRKDKNVKVMHIAEVLNSR.

Belongs to the LutA/YkgE family.

In terms of biological role, is essential for L-lactate degradation and allows cells to grow with lactate as the sole carbon source. May also allow cells to utilize an alternative carbon source during biofilm formation, since it contributes to the formation of architecturally complex communities when lactate is present. In Bacillus subtilis (strain 168), this protein is Lactate utilization protein A (lutA).